A 454-amino-acid polypeptide reads, in one-letter code: Mitochondrial dynamics protein MID49 (454 aa).

Topologically, residues 1–22 (MAEFSQKRGKRRGDEGLGSMVD) are mitochondrial intermembrane. The helical transmembrane segment at 23–43 (FLLANARLVLGVGGAAVLGIA) threads the bilayer. The Cytoplasmic portion of the chain corresponds to 44 to 454 (TLAVKRFIDR…SGLQEPEGLL (411 aa)). A disordered region spans residues 76-119 (ATPHLQPRPPPAALSQPVLPLAPSSSAPEGPAKSDPEVTPQLSS). Over residues 88-108 (ALSQPVLPLAPSSSAPEGPAK) the composition is skewed to low complexity.

The protein belongs to the MID49/MID51 family. Interacts with DNM1L.

It localises to the mitochondrion outer membrane. Its function is as follows. Mitochondrial outer membrane protein which regulates mitochondrial organization. It is required for mitochondrial fission and promotes the recruitment and association of the fission mediator dynamin-related protein 1 (DNM1L) to the mitochondrial surface independently of the mitochondrial fission FIS1 and MFF proteins. Regulates DNM1L GTPase activity. The protein is Mitochondrial dynamics protein MID49 (MIEF2) of Pongo abelii (Sumatran orangutan).